We begin with the raw amino-acid sequence, 315 residues long: DNA-directed RNA polymerase subunit alpha (315 aa).

The tract at residues 1 to 228 is alpha N-terminal domain (alpha-NTD); the sequence is MLEIEKPIIE…EHFKLFMSLT (228 aa). The alpha C-terminal domain (alpha-CTD) stretch occupies residues 245–315; the sequence is KEKVLEMTVE…LGLALKLTEE (71 aa).

The protein belongs to the RNA polymerase alpha chain family. Homodimer. The RNAP catalytic core consists of 2 alpha, 1 beta, 1 beta' and 1 omega subunit. When a sigma factor is associated with the core the holoenzyme is formed, which can initiate transcription.

The enzyme catalyses RNA(n) + a ribonucleoside 5'-triphosphate = RNA(n+1) + diphosphate. In terms of biological role, DNA-dependent RNA polymerase catalyzes the transcription of DNA into RNA using the four ribonucleoside triphosphates as substrates. The chain is DNA-directed RNA polymerase subunit alpha from Clostridium beijerinckii (strain ATCC 51743 / NCIMB 8052) (Clostridium acetobutylicum).